The following is a 445-amino-acid chain: Argininosuccinate synthase (445 aa).

ATP contacts are provided by residues 17–25 (AFSGGLDTS) and alanine 43. Residue tyrosine 99 coordinates L-citrulline. Residues glycine 129 and threonine 131 each contribute to the ATP site. Residues threonine 131, asparagine 135, and aspartate 136 each coordinate L-aspartate. Asparagine 135 contacts L-citrulline. Residue aspartate 136 participates in ATP binding. Residues arginine 139 and serine 192 each coordinate L-citrulline. Aspartate 194 is a binding site for ATP. L-citrulline is bound by residues threonine 201, glutamate 203, and glutamate 280.

It belongs to the argininosuccinate synthase family. Type 2 subfamily. Homotetramer.

Its subcellular location is the cytoplasm. The catalysed reaction is L-citrulline + L-aspartate + ATP = 2-(N(omega)-L-arginino)succinate + AMP + diphosphate + H(+). It participates in amino-acid biosynthesis; L-arginine biosynthesis; L-arginine from L-ornithine and carbamoyl phosphate: step 2/3. This Herminiimonas arsenicoxydans protein is Argininosuccinate synthase.